The chain runs to 542 residues: Major facilitator superfamily transporter mfsA (542 aa).

11 helical membrane-spanning segments follow: residues 19 to 39, 70 to 90, 99 to 119, 127 to 149, 160 to 180, 194 to 214, 321 to 341, 349 to 369, 380 to 400, 413 to 432, and 444 to 464; these read FAAV…AGLL, GAVT…SMFC, LIFM…VCYT, FVIG…PVWQ, FLVC…YWVV, FPVA…LMLP, IMGG…FFMI, LYLI…ACLI, AVGI…LPWI, VGAS…VVMF, and VYLF…FFYV.

Belongs to the major facilitator superfamily. Sugar transporter (TC 2.A.1.1) family.

The protein localises to the membrane. In terms of biological role, major facilitator superfamily transporter that may be involved in A.fumigatus adaptation to azoles such as vorizonazole. The sequence is that of Major facilitator superfamily transporter mfsA from Aspergillus fumigatus (strain ATCC MYA-4609 / CBS 101355 / FGSC A1100 / Af293) (Neosartorya fumigata).